A 325-amino-acid polypeptide reads, in one-letter code: MTATVKDELSRLRVAKPCCRRAEMAALLRFGGGLHIVGGRIVVEAELDTGATARRLRREVAEVFGFPSTVAVLAAGGLRRSVRYIVRVERDGEQLARSTGLLDQRGRPVRGLPPQVVTGSACDAAAAWRGAFLAHGSLTEPGRSCSLEVTSPGPEAALALVGAARRLGVQAKSRDVRGVDRVVIRDGDAIGALLTRIGAHDSLLAWEERRMRREVRATANRLANFDDANLRRSARAAVAAGARVQAAMRILGDDAPEHLLAAGRLRIEHAQASLEELGALADPPLTKDAVAGRIRRLLALADKRANALGIPNTEASVSPDLLENA.

Residues 273-306 constitute a DNA-binding region (H-T-H motif); that stretch reads SLEELGALADPPLTKDAVAGRIRRLLALADKRAN.

This sequence belongs to the WhiA family.

In terms of biological role, involved in cell division and chromosome segregation. The chain is Probable cell division protein WhiA from Frankia casuarinae (strain DSM 45818 / CECT 9043 / HFP020203 / CcI3).